Here is a 369-residue protein sequence, read N- to C-terminus: RAB6-interacting golgin (369 aa).

The interval 1 to 128 is disordered; the sequence is MAQGWAGFSE…HNNVEILPPK (128 aa). Residues 11-27 are compositionally biased toward basic and acidic residues; it reads EELRRLKQTKDPFEPQR. Composition is skewed to polar residues over residues 46–61 and 82–93; these read EQSQ…TSLL and SPTLPSHFTLTS. Residues 106–120 are compositionally biased toward basic and acidic residues; it reads QPKELGLENSHDGHN. Positions 145–297 form a coiled coil; it reads RWEVLQQEQR…EVERLLHEQE (153 aa). Positions 188-369 are necessary for interaction with RCHY1; the sequence is IQKELQALDD…GNDISAALAT (182 aa). The disordered stretch occupies residues 334 to 369; it reads VSPKVDDQCGNSSSIPFLSPNCPNQEGNDISAALAT. Polar residues predominate over residues 342–361; that stretch reads CGNSSSIPFLSPNCPNQEGN.

This sequence belongs to the GORAB family. In terms of assembly, interacts with SCYL1. Interacts with RCHY1 and RAB6A/RAB6.

It is found in the cytoplasm. Its subcellular location is the golgi apparatus. The polypeptide is RAB6-interacting golgin (GORAB) (Homo sapiens (Human)).